Here is a 390-residue protein sequence, read N- to C-terminus: Altered inheritance of mitochondria protein 6 (390 aa).

The N-terminal stretch at 1–26 is a signal peptide; that stretch reads MLGLKGCLTILIGYVIAVCALFSSRG.

It belongs to the AIM6 family.

The chain is Altered inheritance of mitochondria protein 6 (AIM6) from Saccharomyces cerevisiae (strain YJM789) (Baker's yeast).